We begin with the raw amino-acid sequence, 321 residues long: Gap junction delta-2 protein (321 aa).

At 1-19 the chain is on the cytoplasmic side; the sequence is MGEWTILERLLEAAVQQHS. A helical membrane pass occupies residues 20–42; it reads TMIGRILLTVVVIFRILIVAIVG. Topologically, residues 43 to 75 are extracellular; the sequence is ETVYDDEQTMFVCNTLQPGCNQACYDRAFPISH. Residues 76 to 98 form a helical membrane-spanning segment; the sequence is IRYWVFQIIMVCTPSLCFITYSV. The Cytoplasmic segment spans residues 99-197; sequence HQSAKQRERR…KLRRQEGISR (99 aa). The tract at residues 120-141 is disordered; it reads PAESIGGPGGTGGGGSGGSKRE. Residues 125 to 137 show a composition bias toward gly residues; the sequence is GGPGGTGGGGSGG. The helical transmembrane segment at 198-220 threads the bilayer; it reads FYIIQVVFRNALEIGFLVGQYFL. At 221 to 252 the chain is on the extracellular side; the sequence is YGFSVPGLYECNRYPCIKEVECYVSRPTEKTV. A helical transmembrane segment spans residues 253-275; the sequence is FLVFMFAVSGICVVLNLAELNHL. The Cytoplasmic portion of the chain corresponds to 276-321; that stretch reads GWRKIKLAVRGAQAKRKSVYEIRNKDLPRVSVPNFGRTQSSDSAYV.

This sequence belongs to the connexin family. Delta-type subfamily. In terms of assembly, a connexon is composed of a hexamer of connexins. Highly expressed in neurons.

It localises to the cell membrane. Its subcellular location is the cell junction. The protein resides in the gap junction. Functionally, one gap junction consists of a cluster of closely packed pairs of transmembrane channels, the connexons, through which materials of low MW diffuse from one cell to a neighboring cell. In Rattus norvegicus (Rat), this protein is Gap junction delta-2 protein (Gjd2).